The primary structure comprises 440 residues: 23S rRNA (uracil(1939)-C(5))-methyltransferase RlmD (440 aa).

Residues 10–68 (KALPTQAVEITIDNLDHHLTGVGRYQGKACFVEGVLPGEKVSVQITEQKKQYAHARLRQ) form the TRAM domain. The [4Fe-4S] cluster site is built by Cys81, Cys87, Cys90, and Cys169. S-adenosyl-L-methionine contacts are provided by Gln272, Phe301, Asn306, Glu322, Asp349, and Asp372. The Nucleophile role is filled by Cys398.

This sequence belongs to the class I-like SAM-binding methyltransferase superfamily. RNA M5U methyltransferase family. RlmD subfamily.

The catalysed reaction is uridine(1939) in 23S rRNA + S-adenosyl-L-methionine = 5-methyluridine(1939) in 23S rRNA + S-adenosyl-L-homocysteine + H(+). Catalyzes the formation of 5-methyl-uridine at position 1939 (m5U1939) in 23S rRNA. The chain is 23S rRNA (uracil(1939)-C(5))-methyltransferase RlmD from Tolumonas auensis (strain DSM 9187 / NBRC 110442 / TA 4).